The chain runs to 1058 residues: Outer capsid protein VP4 (1058 aa).

This sequence belongs to the orthoreovirus lambda-2 protein family.

It is found in the virion. It carries out the reaction a 5'-end diphospho-ribonucleoside in mRNA + GTP + H(+) = a 5'-end (5'-triphosphoguanosine)-ribonucleoside in mRNA + diphosphate. The catalysed reaction is a 5'-end (5'-triphosphoguanosine)-ribonucleoside in mRNA + S-adenosyl-L-methionine = a 5'-end (N(7)-methyl 5'-triphosphoguanosine)-ribonucleoside in mRNA + S-adenosyl-L-homocysteine. In terms of biological role, outer capsid protein involved in mRNA capping. Catalyzes the last 3 enzymatic activities for formation of the 5' cap structure on the viral plus-strand transcripts, namely the RNA guanylyltransferase, RNA-7N- and RNA-2'O-methyltransferase activities. This Lymantria dispar cypovirus 1 (isolate Rao) (LdCPV-1) protein is Outer capsid protein VP4 (S4).